The primary structure comprises 517 residues: Serine hydroxymethyltransferase 1, mitochondrial (517 aa).

The N-terminal 30 residues, 1-30, are a transit peptide targeting the mitochondrion; the sequence is MAMAMALRRLSSSIDKPIRPLIRSTSCYMS. Lysine 286 bears the N6-(pyridoxal phosphate)lysine mark.

The protein belongs to the SHMT family. Homotetramer. Interacts with GLU1. Interacts with UBP16. Pyridoxal 5'-phosphate is required as a cofactor. Post-translationally, ubiquitinated. In terms of tissue distribution, ubiquitous. Mostly expressed in leaves, less abundant in stems, flowers and siliques, and barely detectable in roots.

Its subcellular location is the mitochondrion. It localises to the cytoplasm. It carries out the reaction (6R)-5,10-methylene-5,6,7,8-tetrahydrofolate + glycine + H2O = (6S)-5,6,7,8-tetrahydrofolate + L-serine. It participates in one-carbon metabolism; tetrahydrofolate interconversion. Functions in the photorespiratory pathway in catalyzing the interconversion of serine and glycine. Involved in controlling cell damage caused by abiotic stress, such as high light and salt and the hypersensitive defense response of plants. This Arabidopsis thaliana (Mouse-ear cress) protein is Serine hydroxymethyltransferase 1, mitochondrial.